We begin with the raw amino-acid sequence, 340 residues long: DNA-directed RNA polymerase subunit alpha (340 aa).

Residues 1 to 226 (MLIAQRPSLT…ELFGLARELN (226 aa)) form an alpha N-terminal domain (alpha-NTD) region. Residues 243–340 (LAADLALPIE…DAGFVETEQY (98 aa)) form an alpha C-terminal domain (alpha-CTD) region.

This sequence belongs to the RNA polymerase alpha chain family. In terms of assembly, homodimer. The RNAP catalytic core consists of 2 alpha, 1 beta, 1 beta' and 1 omega subunit. When a sigma factor is associated with the core the holoenzyme is formed, which can initiate transcription. In terms of processing, the last 19 amino acids in the C-terminal part are cleaved in the spore.

The catalysed reaction is RNA(n) + a ribonucleoside 5'-triphosphate = RNA(n+1) + diphosphate. Functionally, DNA-dependent RNA polymerase catalyzes the transcription of DNA into RNA using the four ribonucleoside triphosphates as substrates. The protein is DNA-directed RNA polymerase subunit alpha of Streptomyces granaticolor.